A 457-amino-acid polypeptide reads, in one-letter code: Mannose-6-phosphate isomerase (457 aa).

Residues Gln-108, His-110, Glu-135, and His-292 each coordinate Zn(2+). The active site involves Arg-311.

This sequence belongs to the mannose-6-phosphate isomerase type 1 family. Requires Zn(2+) as cofactor.

It localises to the cytoplasm. It catalyses the reaction D-mannose 6-phosphate = D-fructose 6-phosphate. It functions in the pathway nucleotide-sugar biosynthesis; GDP-alpha-D-mannose biosynthesis; alpha-D-mannose 1-phosphate from D-fructose 6-phosphate: step 1/2. Its function is as follows. Involved in the synthesis of the GDP-mannose and dolichol-phosphate-mannose required for a number of critical mannosyl transfer reactions. The sequence is that of Mannose-6-phosphate isomerase (pmi1) from Aspergillus fumigatus (strain ATCC MYA-4609 / CBS 101355 / FGSC A1100 / Af293) (Neosartorya fumigata).